Reading from the N-terminus, the 29-residue chain is Dermaseptin-9TR (29 aa).

As to expression, expressed by the skin glands.

The protein localises to the secreted. Functionally, has antimicrobial activity. In Phyllomedusa trinitatis (Trinidad leaf frog), this protein is Dermaseptin-9TR.